The chain runs to 487 residues: Serine carboxypeptidase-like 38 (487 aa).

A signal peptide spans methionine 1–alanine 20. Intrachain disulfides connect cysteine 119/cysteine 368, cysteine 280/cysteine 290, and cysteine 315/cysteine 336. Serine 215 is an active-site residue. Residue asparagine 233 is glycosylated (N-linked (GlcNAc...) asparagine). N-linked (GlcNAc...) asparagine glycosylation is found at asparagine 317 and asparagine 357. Aspartate 407 is a catalytic residue. Asparagine 423 and asparagine 449 each carry an N-linked (GlcNAc...) asparagine glycan. Residue histidine 460 is part of the active site.

This sequence belongs to the peptidase S10 family. Expressed in seedlings, roots, leaves, flowers and siliques.

It is found in the secreted. Functionally, probable carboxypeptidase. The chain is Serine carboxypeptidase-like 38 (SCPL38) from Arabidopsis thaliana (Mouse-ear cress).